Reading from the N-terminus, the 498-residue chain is Glycerol kinase (498 aa).

Thr11 is a binding site for ADP. 3 residues coordinate ATP: Thr11, Ser12, and Ser13. Thr11 is a sn-glycerol 3-phosphate binding site. Residue Arg15 coordinates ADP. 4 residues coordinate sn-glycerol 3-phosphate: Arg81, Glu82, Tyr133, and Asp242. Glycerol-binding residues include Arg81, Glu82, Tyr133, Asp242, and Gln243. ADP contacts are provided by Thr264 and Gly307. Residues Thr264, Gly307, Gln311, and Gly412 each coordinate ATP. The ADP site is built by Gly412 and Asn416.

This sequence belongs to the FGGY kinase family.

It catalyses the reaction glycerol + ATP = sn-glycerol 3-phosphate + ADP + H(+). Its pathway is polyol metabolism; glycerol degradation via glycerol kinase pathway; sn-glycerol 3-phosphate from glycerol: step 1/1. Its activity is regulated as follows. Inhibited by fructose 1,6-bisphosphate (FBP). Functionally, key enzyme in the regulation of glycerol uptake and metabolism. Catalyzes the phosphorylation of glycerol to yield sn-glycerol 3-phosphate. The chain is Glycerol kinase from Delftia acidovorans (strain DSM 14801 / SPH-1).